Consider the following 542-residue polypeptide: Cytochrome P450 27C1 (542 aa).

The N-terminal 80 residues, 1 to 80 (MQTSAMALLA…LAAMPGPRTL (80 aa)), are a transit peptide targeting the mitochondrion. The tract at residues 20–75 (APERGGLLGGGAPRRPQPAGARLPAGARAEDKGAGRPGSPPGGGRAEGPRSLAAMP) is disordered. A compositionally biased stretch (low complexity) spans 32-46 (PRRPQPAGARLPAGA). Cys488 serves as a coordination point for heme.

It belongs to the cytochrome P450 family. Heme serves as cofactor. As to expression, widely expressed, with highest levels in the liver, kidney and pancreas. In terms of tissue distribution, expressed in the skin (at protein level).

It localises to the mitochondrion membrane. The catalysed reaction is all-trans-retinol + 2 reduced [adrenodoxin] + O2 + 2 H(+) = all-trans-3,4-didehydroretinol + 2 oxidized [adrenodoxin] + 2 H2O. The enzyme catalyses all-trans-retinol + 2 reduced [adrenodoxin] + O2 + 2 H(+) = all-trans-4-hydroxyretinol + 2 oxidized [adrenodoxin] + H2O. It carries out the reaction all-trans-retinol + 2 reduced [adrenodoxin] + O2 + 2 H(+) = all-trans-3-hydroxyretinol + 2 oxidized [adrenodoxin] + H2O. Its pathway is cofactor metabolism; retinol metabolism. Functionally, a cytochrome P450 monooxygenase that catalyzes the 3,4 desaturation of all-trans-retinol (also called vitamin A1) to all-trans-3,4-didehydroretinol (also called vitamin A2) in the skin. Desaturates with lower efficiency all-trans retinal and all-trans retinoic acid. Forms minor amounts of 3-hydroxy and 4-hydroxy all-trans-retinol derivatives. Mechanistically, uses molecular oxygen inserting one oxygen atom into a substrate and reducing the second into a water molecule. Two electrons are provided by NADPH via a two-protein mitochondrial transfer system comprising flavoprotein FDXR (adrenodoxin/ferredoxin reductase) and nonheme iron-sulfur protein FDX1 or FDX2 (adrenodoxin/ferredoxin). This is Cytochrome P450 27C1 from Homo sapiens (Human).